A 475-amino-acid polypeptide reads, in one-letter code: ATP-dependent protease ATPase subunit HslU1 (475 aa).

Residues Met-1 to Gly-27 constitute a mitochondrion transit peptide. ATP contacts are provided by residues Ile-66, Gly-108–Glu-113, Asp-286, Glu-353, and Arg-425.

Belongs to the ClpX chaperone family. HslU subfamily. As to quaternary structure, a double ring-shaped homohexamer of HslV is capped on each side by a ring-shaped HslU homohexamer. The assembly of the HslU/HslV complex (HslVU) is dependent on binding of ATP.

The protein resides in the mitochondrion matrix. It is found in the kinetoplast. Functionally, ATPase subunit of a proteasome-like degradation complex; this subunit has chaperone activity. The binding of ATP and its subsequent hydrolysis by HslU are essential for unfolding of protein substrates subsequently hydrolyzed by HslV. HslU recognizes the N-terminal part of its protein substrates and unfolds these before they are guided to HslV for hydrolysis. The HslVU protease complex functions in mitochondrial DNA replication by regulating DNA helicase PIF2 protein levels. The sequence is that of ATP-dependent protease ATPase subunit HslU1 (HslU1) from Trypanosoma brucei brucei (strain 927/4 GUTat10.1).